A 411-amino-acid polypeptide reads, in one-letter code: Glycerol-3-phosphate dehydrogenase [NAD(+)] (411 aa).

NAD(+) contacts are provided by residues 71–76 (GSGNWG), F103, and F159. K182 serves as a coordination point for substrate. A215 contacts NAD(+). Catalysis depends on K275, which acts as the Proton acceptor. NAD(+) is bound by residues R340 and Q369. 340-341 (RN) contributes to the substrate binding site.

Belongs to the NAD-dependent glycerol-3-phosphate dehydrogenase family.

The enzyme catalyses sn-glycerol 3-phosphate + NAD(+) = dihydroxyacetone phosphate + NADH + H(+). The chain is Glycerol-3-phosphate dehydrogenase [NAD(+)] (GPD) from Lachancea thermotolerans (Yeast).